Consider the following 149-residue polypeptide: Macrodomain Ter protein (149 aa).

This sequence belongs to the MatP family. As to quaternary structure, homodimer.

The protein localises to the cytoplasm. In terms of biological role, required for spatial organization of the terminus region of the chromosome (Ter macrodomain) during the cell cycle. Prevents early segregation of duplicated Ter macrodomains during cell division. Binds specifically to matS, which is a 13 bp signature motif repeated within the Ter macrodomain. This Vibrio cholerae serotype O1 (strain ATCC 39315 / El Tor Inaba N16961) protein is Macrodomain Ter protein.